The chain runs to 56 residues: Large ribosomal subunit protein bL32 (56 aa).

The disordered stretch occupies residues 1–26; the sequence is MAVQQNKKSRSKRGMRRSHDALSTAQ. Residues 7–16 are compositionally biased toward basic residues; the sequence is KKSRSKRGMR.

Belongs to the bacterial ribosomal protein bL32 family.

The polypeptide is Large ribosomal subunit protein bL32 (Shewanella denitrificans (strain OS217 / ATCC BAA-1090 / DSM 15013)).